The sequence spans 122 residues: Large ribosomal subunit protein uL14 (122 aa).

Belongs to the universal ribosomal protein uL14 family. As to quaternary structure, part of the 50S ribosomal subunit. Forms a cluster with proteins L3 and L19. In the 70S ribosome, L14 and L19 interact and together make contacts with the 16S rRNA in bridges B5 and B8.

Its function is as follows. Binds to 23S rRNA. Forms part of two intersubunit bridges in the 70S ribosome. The protein is Large ribosomal subunit protein uL14 of Pelodictyon phaeoclathratiforme (strain DSM 5477 / BU-1).